A 149-amino-acid chain; its full sequence is Deoxyuridine 5'-triphosphate nucleotidohydrolase (149 aa).

Residues 68–70 (RSG), N81, 85–87 (LID), and M95 contribute to the substrate site.

It belongs to the dUTPase family. Requires Mg(2+) as cofactor.

It carries out the reaction dUTP + H2O = dUMP + diphosphate + H(+). It functions in the pathway pyrimidine metabolism; dUMP biosynthesis; dUMP from dCTP (dUTP route): step 2/2. Its function is as follows. This enzyme is involved in nucleotide metabolism: it produces dUMP, the immediate precursor of thymidine nucleotides and it decreases the intracellular concentration of dUTP so that uracil cannot be incorporated into DNA. This is Deoxyuridine 5'-triphosphate nucleotidohydrolase from Polynucleobacter necessarius subsp. necessarius (strain STIR1).